The sequence spans 634 residues: Growth hormone receptor (634 aa).

Positions 1 to 18 are cleaved as a signal peptide; it reads MDLWQLLLTLAVAGSSDA. The Extracellular portion of the chain corresponds to 19–260; that stretch reads FSGSEATPAF…NPSACEEDFQ (242 aa). The N-linked (GlcNAc...) asparagine glycan is linked to Asn-46. A disulfide bridge connects residues Cys-56 and Cys-66. N-linked (GlcNAc...) asparagine glycosylation occurs at Asn-73. Cysteines 97 and 108 form a disulfide. N-linked (GlcNAc...) asparagine glycosylation occurs at Asn-111. Cys-122 and Cys-136 are disulfide-bonded. In terms of domain architecture, Fibronectin type-III spans 147 to 250; the sequence is PPVGLNWTLL…EVLLITFPQM (104 aa). Residues Asn-152, Asn-157, and Asn-196 are each glycosylated (N-linked (GlcNAc...) asparagine). Positions 236–240 match the WSXWS motif motif; that stretch reads YGKFS. Residues 261–284 traverse the membrane as a helical segment; the sequence is FPWFLIIIFGILGLAVTLYLLIFS. At 285-634 the chain is on the cytoplasmic side; it reads KQQRIKMLIL…STDQLNKIMP (350 aa). The tract at residues 290-375 is required for JAK2 binding; that stretch reads KMLILPPVPV…HEKSLNIFGA (86 aa). The short motif at 293 to 301 is the Box 1 motif element; sequence ILPPVPVPK. The short motif at 336–345 is the UbE motif element; it reads DSWVEFIELD. The residue at position 337 (Ser-337) is a Phosphoserine.

The protein belongs to the type I cytokine receptor family. Type 1 subfamily. On growth hormone (GH) binding, forms homodimers and binds JAK2 via a box 1-containing domain. In terms of processing, the soluble form (GHBP) is produced by phorbol ester-promoted proteolytic cleavage at the cell surface (shedding) by ADAM17/TACE. Shedding is inhibited by growth hormone (GH) binding to the receptor probably due to a conformational change in GHR rendering the receptor inaccessible to ADAM17. On GH binding, phosphorylated on tyrosine residues in the cytoplasmic domain by JAK2. Post-translationally, ubiquitinated by the ECS(SOCS2) complex following ligand-binding and phosphorylation by JAK2, leading to its degradation by the proteasome. Regulation by the ECS(SOCS2) complex acts as a negative feedback loop of growth hormone receptor signaling. Ubiquitination is not sufficient for GHR internalization.

The protein localises to the cell membrane. Its subcellular location is the secreted. Its function is as follows. Receptor for pituitary gland growth hormone (GH1) involved in regulating postnatal body growth. On ligand binding, couples to the JAK2/STAT5 pathway. Functionally, the soluble form (GHBP) acts as a reservoir of growth hormone in plasma and may be a modulator/inhibitor of GH signaling. This is Growth hormone receptor (GHR) from Bos taurus (Bovine).